The primary structure comprises 2344 residues: Peroxide stress-activated histidine kinase mak3 (2344 aa).

One can recognise a Protein kinase domain in the interval 1–295 (MYSQHELRNK…GIVNDLEACL (295 aa)). Phosphoserine occurs at positions 12, 16, and 17. Polar residues predominate over residues 486–503 (SGNTRKTSLLGSNHSSYS). The segment at 486–506 (SGNTRKTSLLGSNHSSYSDKL) is disordered. 2 TPR repeats span residues 829–862 (CHYLHLAAEEALKIGANQEALDLYNRCIKMIPHE) and 1340–1373 (AFAFETVGSIFVSMELYTSATQYLEEAIRNYAAL). A PAC domain is found at 1730-1781 (FELEIRIKRKDGVYRWNLTRCTPTTNEKNRTSFLCATIDIDDQKKARATALE). Residues 1792–2018 (NISHELRTPF…TFKICYDLKI (227 aa)) enclose the Histidine kinase domain. Phosphohistidine; by autocatalysis is present on H1795. The region spanning 2211–2333 (KILIAEDNPI…TLIKMLLQYL (123 aa)) is the Response regulatory domain. A 4-aspartylphosphate modification is found at D2263.

Its subcellular location is the cytoplasm. The catalysed reaction is ATP + protein L-histidine = ADP + protein N-phospho-L-histidine.. Involved in the control of the SAPK-dependent transcriptional response to peroxide stress. Regulates sty1 activity. This Schizosaccharomyces pombe (strain 972 / ATCC 24843) (Fission yeast) protein is Peroxide stress-activated histidine kinase mak3 (mak3).